The chain runs to 372 residues: Segmentation polarity homeobox protein engrailed (372 aa).

Disordered stretches follow at residues 1-35, 47-112, 196-246, and 261-286; these read MAFE…YSPQ, YERG…LQPT, ERLS…QSNP, and DRPS…PRTA. Basic and acidic residues-rich tracts occupy residues 79–105 and 197–215; these read DYYR…DRSR and RLSR…KRPD. Residues 216–244 show a composition bias toward low complexity; sequence SASSIVSSTSSGAVSTCGSSDASSIQSQS. The homeobox DNA-binding region spans 280 to 339; that stretch reads EKRPRTAFSGAQLARLKHEFAENRYLTERRRQSLAAELGLAEAQIKIWFQNKRAKIKKAS.

It belongs to the engrailed homeobox family. In terms of tissue distribution, expressed in the middle silk gland but not in the posterior silk gland during the fourth molt/fifth intermolt period.

It localises to the nucleus. This protein might be involved in the compartmentalization of the silk gland. This Bombyx mori (Silk moth) protein is Segmentation polarity homeobox protein engrailed (en).